The following is a 606-amino-acid chain: Flagellar WD repeat-containing protein Pf20 (606 aa).

Positions P229–S250 are disordered. WD repeat units lie at residues G324 to H354, G366 to D396, D408 to D438, G450 to D480, G492 to D522, T534 to S564, and G576 to S606.

As to quaternary structure, inter-microtubule bridges in flagella.

The protein resides in the cell projection. It localises to the cilium. It is found in the flagellum. The polypeptide is Flagellar WD repeat-containing protein Pf20 (PF20) (Chlamydomonas reinhardtii (Chlamydomonas smithii)).